A 670-amino-acid polypeptide reads, in one-letter code: Solute carrier organic anion transporter family member 1A5 (670 aa).

The Cytoplasmic portion of the chain corresponds to 1-20; sequence MGETEKRVATHEVRCFSKIK. A helical transmembrane segment spans residues 21–40; sequence MFLLALTWAYVSKSLSGIYM. Over 41–59 the chain is Extracellular; it reads NTMLTQIERQFDIPTSIVG. Residues 60 to 80 form a helical membrane-spanning segment; it reads FINGSFEIGNLLLIIFVSYFG. Over 81 to 86 the chain is Cytoplasmic; it reads TKLHRP. A helical transmembrane segment spans residues 87-111; that stretch reads IMIGVGCVIMGLGCFLMSLPHFLMG. Residues 112–155 lie on the Extracellular side of the membrane; that stretch reads RYEYETTISPTSNLSSNSFLCMENRSQTLKPTQDPAECIKEMKS. Asn-124 and Asn-135 each carry an N-linked (GlcNAc...) asparagine glycan. A helical membrane pass occupies residues 156–184; it reads LMWIYVLVGNIIRGIGETPIMPLGISYIE. The Cytoplasmic portion of the chain corresponds to 185 to 203; sequence DFAKSENSPLYIGILETGK. The chain crosses the membrane as a helical span at residues 204-224; sequence VFGPIVGLLLGSFCASIYVDT. The Extracellular segment spans residues 225–242; it reads GSVNTDDLTITPTDTRWV. Residues 243–267 form a helical membrane-spanning segment; it reads GAWWIGFLICAGVNILSSIPFFFFP. At 268–311 the chain is on the cytoplasmic side; that stretch reads KTLPKEGLQDDVDGTNNDKEEKHREKAKEENRGITKDFLPFMKS. The chain crosses the membrane as a helical span at residues 312–333; it reads LSCNPIYMLLILTSVLQINAFI. The Extracellular portion of the chain corresponds to 334-353; it reads NMFTFLPKYLEQQYGKSTAE. Residues 354–377 form a helical membrane-spanning segment; that stretch reads VVLLIGVYNLPPICIGYLLIGFIM. The Cytoplasmic portion of the chain corresponds to 378–381; sequence KKFK. The helical transmembrane segment at 382–405 threads the bilayer; sequence ITVKKAAYMAFCLSLFEYLLYFLH. Residues 406-513 are Extracellular-facing; sequence FMITCDNFPV…PECANKLQYF (108 aa). The 56-residue stretch at 433–488 folds into the Kazal-like domain; it reads NKVLADCNRGCSCSTNSWDPVCGDNGLAYMSACLAGCKKSVGTGTNMVFQNCSCIR. Intrachain disulfides connect Cys-439–Cys-469, Cys-445–Cys-465, and Cys-454–Cys-486. Residues Asn-483 and Asn-492 are each glycosylated (N-linked (GlcNAc...) asparagine). Residues 514-536 form a helical membrane-spanning segment; that stretch reads LIMSVIGSFIYSITAIPGYMVLL. At 537–545 the chain is on the cytoplasmic side; it reads RCIKPEEKS. A helical transmembrane segment spans residues 546-571; it reads LGIGLHAFCTRVFAGIPAPIYFGALI. The Extracellular segment spans residues 572–605; the sequence is DRTCLHWGTLKCGEPGACRMYNINNFRRIYLVLP. The helical transmembrane segment at 606 to 623 threads the bilayer; the sequence is AALRGSSYLPALFILILM. At 624 to 670 the chain is on the cytoplasmic side; the sequence is RKFQFPGEIDSSETELAEMKITVKKSECTDVHGSPQVENDGELKTRL.

It belongs to the organo anion transporter (TC 2.A.60) family. As to expression, highly expressed in the kidney, moderately abundant in the retina, and even lower in the liver. Expressed (at protein level) in the small intestine. Expressed at lower levels in brain,lung, and retina.

Its subcellular location is the cell membrane. It localises to the basal cell membrane. It catalyses the reaction taurocholate(out) = taurocholate(in). It carries out the reaction glycocholate(out) = glycocholate(in). The enzyme catalyses taurochenodeoxycholate(out) = taurochenodeoxycholate(in). The catalysed reaction is tauroursodeoxycholate(out) = tauroursodeoxycholate(in). It catalyses the reaction 3,3',5'-triiodo-L-thyronine(out) = 3,3',5'-triiodo-L-thyronine(in). It carries out the reaction L-thyroxine(out) = L-thyroxine(in). The enzyme catalyses taurodeoxycholate(out) = taurodeoxycholate(in). The catalysed reaction is glycodeoxycholate(out) = glycodeoxycholate(in). It catalyses the reaction glycochenodeoxycholate(out) = glycochenodeoxycholate(in). It carries out the reaction glycoursodeoxycholate(out) = glycoursodeoxycholate(in). The enzyme catalyses estrone 3-sulfate(out) = estrone 3-sulfate(in). The catalysed reaction is prostaglandin E2(out) = prostaglandin E2(in). It catalyses the reaction substance P(out) = substance P(in). In terms of biological role, na(+)-independent transporter that mediates the cellular uptake of a broad range of organic anions such as the endogenous bile salts cholate and deoxycholate, either in their unconjugated or conjugated forms (taurocholate and glycocholate), estrone 3-sulfate and prostaglandin E2, at the plasma membrane. Responsible for intestinal absorption of bile acids. Capable of thyroid hormone transport (both T3 or 3,3',5'-triiodo-L-thyronine, and T4 or L-tyroxine). Plays roles in blood-brain and -cerebrospinal fluid barrier transport of organic anions and signal mediators, and in hormone uptake by neural cells. May also play a role in the reuptake of neuropeptides such as substance P/TAC1 and vasoactive intestinal peptide/VIP released from retinal neurons. Shows a pH-sensitive substrate specificity which may be ascribed to the protonation state of the binding site and leads to a stimulation of substrate transport in an acidic microenvironment. Hydrogencarbonate/HCO3(-) acts as the probable counteranion that exchanges for organic anions. May contribute to regulate the transport of organic compounds in testis across the blood-testis-barrier. This Rattus norvegicus (Rat) protein is Solute carrier organic anion transporter family member 1A5 (Slco1a5).